The primary structure comprises 79 residues: Adipokinetic hormone (79 aa).

Residues 1–22 form the signal peptide; that stretch reads MNPKSEVLIAAVLFMLLACVQC. Gln23 is modified (pyrrolidone carboxylic acid). Residue Trp30 is modified to Tryptophan amide. Residues 34–79 constitute a propeptide that is removed on maturation; that stretch reads SVGGAGPGTFFETQQGNCKTSNEMLLEIFRFVQSQAQLFLDCKHRE.

It belongs to the AKH/HRTH/RPCH family.

It localises to the secreted. Probably causes a marked increase in hemolymph carbohydrate. The chain is Adipokinetic hormone (Akh) from Drosophila melanogaster (Fruit fly).